Consider the following 60-residue polypeptide: Large ribosomal subunit protein bL32 (60 aa).

Residues 1 to 60 form a disordered region; sequence MAVQQVKKSRSKRDMRRSHDSLTGPTLSTDKSTGELHLRHHVSPNGFYKGKKVVDTKSED. The span at 7–16 shows a compositional bias: basic residues; that stretch reads KKSRSKRDMR.

This sequence belongs to the bacterial ribosomal protein bL32 family.

In Francisella philomiragia subsp. philomiragia (strain ATCC 25017 / CCUG 19701 / FSC 153 / O#319-036), this protein is Large ribosomal subunit protein bL32.